A 197-amino-acid chain; its full sequence is dTTP/UTP pyrophosphatase (197 aa).

Asp-70 acts as the Proton acceptor in catalysis.

Belongs to the Maf family. YhdE subfamily. Requires a divalent metal cation as cofactor.

The protein localises to the cytoplasm. The enzyme catalyses dTTP + H2O = dTMP + diphosphate + H(+). It catalyses the reaction UTP + H2O = UMP + diphosphate + H(+). Functionally, nucleoside triphosphate pyrophosphatase that hydrolyzes dTTP and UTP. May have a dual role in cell division arrest and in preventing the incorporation of modified nucleotides into cellular nucleic acids. This Escherichia coli O6:K15:H31 (strain 536 / UPEC) protein is dTTP/UTP pyrophosphatase (yceF2).